We begin with the raw amino-acid sequence, 399 residues long: Bombesin receptor subtype-3 (399 aa).

Positions Met1 to Ser31 are enriched in polar residues. A disordered region spans residues Met1–Gly38. Over Met1–Ser41 the chain is Extracellular. Residues Asn10, Asn18, and Asn29 are each glycosylated (N-linked (GlcNAc...) asparagine). The helical transmembrane segment at Pro42–Leu63 threads the bilayer. At Gly64–Pro82 the chain is on the cytoplasmic side. Residues Asn83–Val103 traverse the membrane as a helical segment. Residues Asp104–Lys121 lie on the Extracellular side of the membrane. A disulfide bridge links Cys120 with Cys203. The chain crosses the membrane as a helical span at residues Val122–Ala143. At Asp144 to Lys163 the chain is on the cytoplasmic side. Residues Thr164–Ile184 traverse the membrane as a helical segment. Residues Phe185 to Leu220 lie on the Extracellular side of the membrane. The helical transmembrane segment at Cys221 to Ala241 threads the bilayer. The Cytoplasmic segment spans residues Arg242–Thr272. A helical transmembrane segment spans residues Val273–Tyr293. Topologically, residues Arg294–Ile313 are extracellular. The chain crosses the membrane as a helical span at residues Ile314–Leu333. Topologically, residues Ser334–Val399 are cytoplasmic.

Belongs to the G-protein coupled receptor 1 family. In terms of assembly, interacts with C6orf89.

It is found in the cell membrane. In terms of biological role, role in sperm cell division, maturation, or function. This receptor mediates its action by association with G proteins that activate a phosphatidylinositol-calcium second messenger system. The sequence is that of Bombesin receptor subtype-3 (BRS3) from Ovis aries (Sheep).